A 1108-amino-acid polypeptide reads, in one-letter code: Retinal guanylyl cyclase 2 (1108 aa).

A signal peptide spans 1 to 50 (MFLGPWPFSRLLSWFAISSRLSGQHGLPSSKFLRCLCLLALLPLLRWGQA). Residues 51–469 (LPYKIGVIGP…CQGGIDPALA (419 aa)) lie on the Extracellular side of the membrane. Cys104 and Cys132 are disulfide-bonded. A helical membrane pass occupies residues 470–490 (MMVCFALLIALLSINGFAYFI). Residues 491 to 1108 (RRRINKIQLI…AERQLVRNKP (618 aa)) lie on the Cytoplasmic side of the membrane. The region spanning 532 to 812 (FQIISEVQSG…DEIFNQFKTF (281 aa)) is the Protein kinase domain. Residues 884–1014 (TLYFSDIVGF…DTVNTASRME (131 aa)) form the Guanylate cyclase domain.

This sequence belongs to the adenylyl cyclase class-4/guanylyl cyclase family. Homodimer. Interacts with RD3; promotes the exit of GUCY2F from the endoplasmic reticulum and its trafficking to the photoreceptor outer segments. Post-translationally, there are 9 conserved cysteine residues in sensory guanylate cyclases, 6 in the extracellular domain, which may be involved in intra- or interchain disulfide bonds. In terms of tissue distribution, retina.

Its subcellular location is the membrane. It localises to the photoreceptor outer segment membrane. It catalyses the reaction GTP = 3',5'-cyclic GMP + diphosphate. Activated by GUCA1B when free calcium ions concentration is low, and inhibited by GUCA1B when free calcium ions concentration is high. Inhibited by RD3. Responsible for the synthesis of cyclic GMP (cGMP) in rods and cones of photoreceptors. Plays an essential role in phototransduction, by mediating cGMP replenishment. May also participate in the trafficking of membrane-asociated proteins to the photoreceptor outer segment membrane. This chain is Retinal guanylyl cyclase 2, found in Mus musculus (Mouse).